The primary structure comprises 148 residues: Ubiquitin-conjugating enzyme E2 5B (148 aa).

Positions 1-147 (MASKRILKEL…ARSWTQKYAM (147 aa)) constitute a UBC core domain. C85 serves as the catalytic Glycyl thioester intermediate.

The protein belongs to the ubiquitin-conjugating enzyme family.

The enzyme catalyses S-ubiquitinyl-[E1 ubiquitin-activating enzyme]-L-cysteine + [E2 ubiquitin-conjugating enzyme]-L-cysteine = [E1 ubiquitin-activating enzyme]-L-cysteine + S-ubiquitinyl-[E2 ubiquitin-conjugating enzyme]-L-cysteine.. It functions in the pathway protein modification; protein ubiquitination. Its function is as follows. E2 conjugating enzyme that associates with the E3 ubiquitin-protein ligase EL5 to mediate ubiquitination of target proteins. This Oryza sativa subsp. japonica (Rice) protein is Ubiquitin-conjugating enzyme E2 5B (UBC5B).